Consider the following 190-residue polypeptide: Elongation factor P-like protein (190 aa).

Belongs to the elongation factor P family.

The chain is Elongation factor P-like protein from Erwinia tasmaniensis (strain DSM 17950 / CFBP 7177 / CIP 109463 / NCPPB 4357 / Et1/99).